A 107-amino-acid chain; its full sequence is U1-lycotoxin-Ls1b (107 aa).

Residues 1–20 (MMKVLVVFALLVTLISYSSS) form the signal peptide. Positions 21 to 41 (EGIDDLEADELLSLMANEQTR) are excised as a propeptide. Cystine bridges form between Cys-44/Cys-59, Cys-51/Cys-68, Cys-58/Cys-86, and Cys-70/Cys-84.

It belongs to the neurotoxin 19 (CSTX) family. 04 (U1-Lctx) subfamily. In terms of tissue distribution, expressed by the venom gland.

It is found in the secreted. In Lycosa singoriensis (Wolf spider), this protein is U1-lycotoxin-Ls1b.